Reading from the N-terminus, the 396-residue chain is 1-deoxy-D-xylulose 5-phosphate reductoisomerase (396 aa).

Residues Thr13, Gly14, Ser15, Ile16, and Asn127 each contribute to the NADPH site. 1-deoxy-D-xylulose 5-phosphate is bound at residue Lys128. Glu129 provides a ligand contact to NADPH. Asp153 contributes to the Mn(2+) binding site. Ser154, Glu155, Ser184, and His207 together coordinate 1-deoxy-D-xylulose 5-phosphate. Glu155 lines the Mn(2+) pocket. Gly213 lines the NADPH pocket. 1-deoxy-D-xylulose 5-phosphate-binding residues include Ser220, Asn225, Lys226, and Glu229. Glu229 is a binding site for Mn(2+).

It belongs to the DXR family. Mg(2+) serves as cofactor. The cofactor is Mn(2+).

The catalysed reaction is 2-C-methyl-D-erythritol 4-phosphate + NADP(+) = 1-deoxy-D-xylulose 5-phosphate + NADPH + H(+). The protein operates within isoprenoid biosynthesis; isopentenyl diphosphate biosynthesis via DXP pathway; isopentenyl diphosphate from 1-deoxy-D-xylulose 5-phosphate: step 1/6. Functionally, catalyzes the NADPH-dependent rearrangement and reduction of 1-deoxy-D-xylulose-5-phosphate (DXP) to 2-C-methyl-D-erythritol 4-phosphate (MEP). The chain is 1-deoxy-D-xylulose 5-phosphate reductoisomerase from Pseudomonas putida (strain W619).